Reading from the N-terminus, the 128-residue chain is Probable 4-amino-4-deoxy-L-arabinose-phosphoundecaprenol flippase subunit ArnF (128 aa).

At 1–2 (MG) the chain is on the cytoplasmic side. The helical transmembrane segment at 3 to 23 (LIWGLFSVIIASVAQLSLGFA) threads the bilayer. Residues 24–35 (ASHLPPMTHLWD) lie on the Periplasmic side of the membrane. Residues 36–56 (FIAALLAFGLDARILLLGLLG) form a helical membrane-spanning segment. At 57–76 (YLLSVFCWYKTLHKLALSKA) the chain is on the cytoplasmic side. The helical transmembrane segment at 77 to 97 (YALLSMSYVLVWIASMVLPGW) threads the bilayer. At 98 to 100 (EGT) the chain is on the periplasmic side. Residues 101–121 (FSLKALLGVACIMSGLMLIFL) form a helical membrane-spanning segment. Over 122–128 (PMTKQRY) the chain is Cytoplasmic.

Belongs to the ArnF family. In terms of assembly, heterodimer of ArnE and ArnF.

The protein localises to the cell inner membrane. It functions in the pathway bacterial outer membrane biogenesis; lipopolysaccharide biosynthesis. Translocates 4-amino-4-deoxy-L-arabinose-phosphoundecaprenol (alpha-L-Ara4N-phosphoundecaprenol) from the cytoplasmic to the periplasmic side of the inner membrane. The polypeptide is Probable 4-amino-4-deoxy-L-arabinose-phosphoundecaprenol flippase subunit ArnF (Escherichia coli O9:H4 (strain HS)).